We begin with the raw amino-acid sequence, 156 residues long: ATP synthase subunit b (156 aa).

A helical membrane pass occupies residues Leu-7 to Pro-27.

Belongs to the ATPase B chain family. F-type ATPases have 2 components, F(1) - the catalytic core - and F(0) - the membrane proton channel. F(1) has five subunits: alpha(3), beta(3), gamma(1), delta(1), epsilon(1). F(0) has three main subunits: a(1), b(2) and c(10-14). The alpha and beta chains form an alternating ring which encloses part of the gamma chain. F(1) is attached to F(0) by a central stalk formed by the gamma and epsilon chains, while a peripheral stalk is formed by the delta and b chains.

The protein localises to the cell inner membrane. Its function is as follows. F(1)F(0) ATP synthase produces ATP from ADP in the presence of a proton or sodium gradient. F-type ATPases consist of two structural domains, F(1) containing the extramembraneous catalytic core and F(0) containing the membrane proton channel, linked together by a central stalk and a peripheral stalk. During catalysis, ATP synthesis in the catalytic domain of F(1) is coupled via a rotary mechanism of the central stalk subunits to proton translocation. In terms of biological role, component of the F(0) channel, it forms part of the peripheral stalk, linking F(1) to F(0). This is ATP synthase subunit b from Acidovorax sp. (strain JS42).